Reading from the N-terminus, the 271-residue chain is MGVGKEVSFKESFFLSHGNPAMLADESFIARNFLLGWKKNVFPVKPKSILVVSAHWETDVPCVSAGQYPNVIYDFTEVPASMFQMKYPAPGCPKLAKRVQELLIAGGFKSAKLDEERGFDHSSWVPLSMMCPEADIPVCQLSVQPGLDATHHFNVGRALAPLKGEGVLFIGSGGAVHPSDDTPHWFDGVAPWAAEFDQWLEDALLEGRYEDVNNYQTKAPEGWKLAHPIPEHFLPLHVAMGAGGEKSKAELIYRTWDHGTLGYASYKFTSI.

Zn(2+)-binding residues include His17, His55, His177, and His232.

The protein belongs to the DODA-type extradiol aromatic ring-opening dioxygenase family. Zn(2+) serves as cofactor. Fe(2+) is required as a cofactor. Expressed only in colored petals and pigmented tissues, absent from green stems and leaves.

It is found in the cytoplasm. It catalyses the reaction L-dopa + O2 = 4-(L-alanin-3-yl)-2-hydroxy-cis,cis-muconate 6-semialdehyde + H(+). It functions in the pathway pigment biosynthesis; betalain biosynthesis. In terms of biological role, opens the cyclic ring of dihydroxy-phenylalanine (DOPA) between carbons 4 and 5, thus producing an unstable seco-DOPA that rearranges nonenzymatically to betalamic acid. This Portulaca grandiflora (Rose moss) protein is 4,5-DOPA dioxygenase extradiol (DODA).